A 2472-amino-acid chain; its full sequence is MDPSGVKVLETAEDIQERRQQVLDRYHRFKELSTLRRQKLEDSYRFQFFQRDAEELEKWIQEKLQVASDENYKDPTNLQGKLQKHQAFEAEVQANSGAIVKLDETGNLMISEGHFASETIRTRLMELHRQWELLLEKMREKGIKLLQAQKLVQYLRECEDVMDWINDKEAIVTSEELGQDLEHVEVLQKKFEEFQTDLAAHEERVNEVNQFAAKLIQEQHPEEELIKTKQEEVNAAWQRLKGLALQRQGKLFGAAEVQRFNRDVDETIGWIKEKEQLMASDDFGRDLASVQALLRKHEGLERDLAALEDKVKALCAEADRLQQSHPLSANQIQVKREELITNWEQIRTLAAERHARLDDSYRLQRFLADFRDLTSWVTEMKALINADELANDVAGAEALLDRHQEHKGEIDAHEDSFKSADESGQALLAAGHYASDEVREKLSILSEERAALLELWELRRQQYEQCMDLQLFYRDTEQVDNWMSKQEAFLLNEDLGDSLDSVEALLKKHEDFEKSLSAQEEKITALDEFATKLIQNNHYAMEDVATRRDALLSRRNALHERAMHRRAQLADSFHLQQFFRDSDELKSWVNEKMKTATDEAYKDPSNLQGKVQKHQAFEAELSANQSRIDALEKAGQKLIDVNHYAKEEVAARMNEVISLWKKLLEATELKGVKLREANQQQQFNRNVEDIELWLYEVEGHLASDDYGKDLTNVQNLQKKHALLEADVAAHQDRIDGITIQARQFQDAGHFDAENIKKKQEALVARYEALKEPMVARKQKLADSLRLQQLFRDVEDEETWIREKEPIAASTNRGKDLIGVQNLLKKHQALQAEIAGHEPRIKAVTQKGNAMVEEGHFAAEDVKAKLSELNQKWEALKAKASQRRQDLEDSLQAQQYFADANEAESWMREKEPIVGSTDYGKDEDSAEALLKKHEALMSDLSAYGSSIQALREQAQSCRQQVAPMDDETGKELVLALYDYQEKSPREVTMKKGDILTLLNSTNKDWWKVEVNDRQGFVPAAYVKKLDPAQSASRENLLEEQGSIALRQGQIDNQTRITKEAGSVSLRMKQVEELYQSLLELGEKRKGMLEKSCKKFMLFREANELQQWINEKEAALTSEEVGADLEQVEVLQKKFDDFQKDLKANESRLKDINKVAEDLESEGLMAEEVQAVQQQEVYGMMPRDEADSKTASPWKSARLMVHTVATFNSIKELNERWRSLQQLAEERSQLLGSAHEVQRFHRDADETKEWIEEKNQALNTDNYGHDLASVQALQRKHEGFERDLAALGDKVNSLGETAQRLIQSHPESAEDLKEKCTELNQAWTSLGKRADQRKAKLGDSHDLQRFLSDFRDLMSWINGIRGLVSSDELAKDVTGAEALLERHQEHRTEIDARAGTFQAFEQFGQQLLAHGHYASPEIKEKLDILDQERTDLEKAWVQRRMMLDHCLELQLFHRDCEQAENWMAAREAFLNTEDKGDSLDSVEALIKKHEDFDKAINVQEEKIAALQAFADQLIAVDHYAKGDIANRRNEVLDRWRRLKAQMIEKRSKLGESQTLQQFSRDVDEIEAWISEKLQTASDESYKDPTNIQSKHQKHQAFEAELHANADRIRGVIDMGNSLIERGACAGSEDAVKARLAALADQWQFLVQKSAEKSQKLKEANKQQNFNTGIKDFDFWLSEVEALLASEDYGKDLASVNNLLKKHQLLEADISAHEDRLKDLNSQADSLMTSSAFDTSQVKEKRDTINGRFQKIKSMATSRRAKLSESHRLHQFFRDMDDEESWIKEKKLLVSSEDYGRDLTGVQNLRKKHKRLEAELAAHEPAIQGVLDTGKKLSDDNTIGQEEIQQRLAQFVEHWKELKQLAAARGQRLEESLEYQQFVANVEEEEAWINEKMTLVASEDYGDTLAAIQGLLKKHEAFETDFTVHKDRVNDVCTNGQDLIKKNNHHEENISSKMKGLNGKVSDLEKAAAQRKAKLDENSAFLQFNWKADVVESWIGEKENSLKTDDYGRDLSSVQTLLTKQETFDAGLQAFQQEGIANITALKDQLLAAKHIQSKAIEARHASLMKRWTQLLANSATRKKKLLEAQSHFRKVEDLFLTFAKKASAFNSWFENAEEDLTDPVRCNSLEEIKALREAHDAFRSSLSSAQADFNQLAELDRQIKSFRVASNPYTWFTMEALEETWRNLQKIIKERELELQKEQRRQEENDKLRQEFAQHANAFHQWIQETRTYLLDGSCMVEESGTLESQLEATKRKHQEIRAMRSQLKKIEDLGAAMEEALILDNKYTEHSTVGLAQQWDQLDQLGMRMQHNLEQQIQARNTTGVTEEALKEFSMMFKHFDKDKSGRLNHQEFKSCLRSLGYDLPMVEEGEPDPEFEAILDTVDPNRDGHVSLQEYMAFMISRETENVKSSEEIESAFRALSSEGKPYVTKEELYQNLTREQADYCVSHMKPYVDGKGRELPTAFDYVEFTRSLFVN.

Position 1 is an N-acetylmethionine (Met1). 9 Spectrin repeats span residues 45-146, 150-251, 256-358, 361-465, 468-570, 574-676, 679-781, 785-888, and 891-961; these read RFQF…IKLL, KLVQ…QGKL, EVQR…ARLD, YRLQ…QYEQ, DLQL…AQLA, HLQQ…KLRE, QQQQ…QKLA, RLQQ…DLED, and QAQQ…QQVA. A Phosphoserine modification is found at Ser587. Lys637 is subject to N6-acetyllysine. Lys803 carries the post-translational modification N6-acetyllysine. Residues Ser924, Ser982, Ser999, Ser1029, Ser1031, and Ser1041 each carry the phosphoserine modification. Residues 967-1026 form the SH3 domain; sequence TGKELVLALYDYQEKSPREVTMKKGDILTLLNSTNKDWWKVEVNDRQGFVPAAYVKKLDP. One copy of the Spectrin 10 repeat lies at 1096–1166; the sequence is LFREANELQQ…LESEGLMAEE (71 aa). The residue at position 1176 (Tyr1176) is a Phosphotyrosine. 7 positions are modified to phosphoserine: Ser1190, Ser1207, Ser1217, Ser1291, Ser1306, Ser1323, and Ser1338. The Spectrin 11 repeat unit spans residues 1233 to 1336; the sequence is HEVQRFHRDA…RADQRKAKLG (104 aa). Spectrin repeat units lie at residues 1339–1441 and 1446–1549; these read HDLQ…RMML and ELQL…KLGE. N6-acetyllysine is present on Lys1519. A phosphoserine mark is found at Ser1550, Ser1557, Ser1578, Ser1615, and Ser1647. 7 Spectrin repeats span residues 1552–1656, 1659–1762, 1764–1868, 1871–1974, 1978–2081, 2092–2194, and 2206–2310; these read TLQQ…KLKE, KQQN…KLSE, HRLH…RLEE, EYQQ…KLDE, FLQF…KLLE, LFLT…LELQ, and LRQE…NLEQ. Thr2020 is modified (phosphothreonine). Residue Lys2052 is modified to N6-acetyllysine. Position 2066 is a phosphothreonine (Thr2066). 3 EF-hand domains span residues 2323–2358, 2366–2401, and 2404–2439; these read EALK…LGYD, EPDP…RETE, and KSSE…EQAD. Ca(2+) is bound by residues Asp2336, Asp2338, Ser2340, Arg2342, Glu2347, Asp2379, Asn2381, Asp2383, His2385, and Glu2390. An N6-acetyllysine modification is found at Lys2421.

Belongs to the spectrin family. In terms of assembly, like erythrocyte spectrin, the spectrin-like proteins are capable of forming dimers which can further associate to tetramers. Interacts (via C-terminal spectrin repeats) with TRPC4. Interacts with CALM and EMD. Interacts with isoform 1 of ACP1. Identified in a complex with ACTN4, CASK, IQGAP1, MAGI2, NPHS1 and SPTBN1. Interacts with SHANK3 (via ANK repeats). Interacts with CLN3; this interaction regulates the fodrin localization at the plasma membrane. Phosphorylation of Tyr-1176 decreases sensitivity to cleavage by calpain in vitro. In terms of tissue distribution, expressed in the foot process layer of podocytes in the kidney glomerulus and in tubules (at protein level).

The protein resides in the cytoplasm. Its subcellular location is the cytoskeleton. The protein localises to the cell cortex. In terms of biological role, fodrin, which seems to be involved in secretion, interacts with calmodulin in a calcium-dependent manner and is thus candidate for the calcium-dependent movement of the cytoskeleton at the membrane. This Rattus norvegicus (Rat) protein is Spectrin alpha chain, non-erythrocytic 1 (Sptan1).